The chain runs to 99 residues: Large ribosomal subunit protein uL23 (99 aa).

Belongs to the universal ribosomal protein uL23 family. Part of the 50S ribosomal subunit. Contacts protein L29, and trigger factor when it is bound to the ribosome.

In terms of biological role, one of the early assembly proteins it binds 23S rRNA. One of the proteins that surrounds the polypeptide exit tunnel on the outside of the ribosome. Forms the main docking site for trigger factor binding to the ribosome. The sequence is that of Large ribosomal subunit protein uL23 from Agathobacter rectalis (strain ATCC 33656 / DSM 3377 / JCM 17463 / KCTC 5835 / VPI 0990) (Eubacterium rectale).